The sequence spans 525 residues: uncharacterized protein (525 aa).

A signal peptide spans 1-21 (MLECLSALLVLFAGGGGSVLA). The Extracellular segment spans residues 22 to 448 (AVQSKTVADP…ISAASQLDKR (427 aa)). The disordered stretch occupies residues 242–264 (KVSSENCSKDTDDKSGSKKERNT). The helical transmembrane segment at 449–469 (IFIFTAITVSITTLMMLGFSY) threads the bilayer. At 470-525 (RSRVSFRDHSIDDSDDDNDWSDDEVEFDEEYFYSLPVSIPEKGISLDKMAQQLGVE) the chain is on the cytoplasmic side.

The protein resides in the membrane. This is an uncharacterized protein from Saccharomyces cerevisiae (strain YJM789) (Baker's yeast).